The following is a 514-amino-acid chain: Cilia- and flagella-associated protein 53 (514 aa).

Coiled coils occupy residues 91-176 (VINT…EKKV) and 205-478 (WEED…AGLA). Disordered regions lie at residues 261–296 (QNKA…QDKI) and 495–514 (QALS…KPPL).

Belongs to the CFAP53 family. In terms of assembly, microtubule inner protein component of sperm flagellar doublet microtubules. Interacts with PIERCE1 and PIERCE2; the interactions link outer dynein arms docking complex (ODA-DC) to the internal microtubule inner proteins (MIP) in cilium axoneme. Interacts with CCDC38. Interacts with CCDC42 and IFT88. Interacts with centriolar satellite proteins PIBF1/CEP90 and PCM1. Interacts with dyneins DNAIC1, DNAIC2 AND DNAH11 and with ODA-DC component ODAD4/TTC25. As to expression, expressed predominantly in testis (at protein level). In embryos at 8 dpc, specifically expressed in the node, in particular within the pit cells that are located at the center of the node and have rotating monocilia on their apical surface. In the adult, expressed in epithelial cells of the trachea, brain ventricles, oviduct and testis.

Its subcellular location is the cytoplasm. The protein resides in the cytoskeleton. It localises to the cilium axoneme. The protein localises to the flagellum axoneme. It is found in the microtubule organizing center. Its subcellular location is the centrosome. The protein resides in the centriolar satellite. It localises to the spindle pole. Its function is as follows. Microtubule inner protein (MIP) part of the dynein-decorated doublet microtubules (DMTs) in cilia axoneme, which is required for motile cilia beating. Regulates motility patterns of both 9+0 and 9+2 motile cilia through differential localization and recruitment of axonemal dynein components. Required for centriolar satellite integrity and non-motile cilium assembly. Required for motile cilium formation. Through its role in the beating of primary cilia, involved in the establishment of organ laterality during embryogenesis. Required for sperm flagellum biogenesis and is essential for male fertility. The chain is Cilia- and flagella-associated protein 53 from Mus musculus (Mouse).